The chain runs to 409 residues: Tyrosine--tRNA ligase (409 aa).

Residues 54 to 63 (PTAPDIHLGH) carry the 'HIGH' region motif. The 'KMSKS' region signature appears at 238–242 (KMSKS). Lys241 serves as a coordination point for ATP. Residues 347-407 (QGILRILREA…GKRKFARVKL (61 aa)) enclose the S4 RNA-binding domain.

This sequence belongs to the class-I aminoacyl-tRNA synthetase family. TyrS type 2 subfamily. In terms of assembly, homodimer.

The protein localises to the cytoplasm. The enzyme catalyses tRNA(Tyr) + L-tyrosine + ATP = L-tyrosyl-tRNA(Tyr) + AMP + diphosphate + H(+). In terms of biological role, catalyzes the attachment of tyrosine to tRNA(Tyr) in a two-step reaction: tyrosine is first activated by ATP to form Tyr-AMP and then transferred to the acceptor end of tRNA(Tyr). The polypeptide is Tyrosine--tRNA ligase (Bordetella parapertussis (strain 12822 / ATCC BAA-587 / NCTC 13253)).